Consider the following 302-residue polypeptide: L-glutamate/L-aspartate-binding protein (302 aa).

The first 23 residues, methionine 1–alanine 23, serve as a signal peptide directing secretion.

The protein belongs to the bacterial solute-binding protein 3 family.

It is found in the periplasm. Functionally, binds L-glutamate and L-aspartate. This chain is L-glutamate/L-aspartate-binding protein, found in Pseudomonas aeruginosa (strain ATCC 15692 / DSM 22644 / CIP 104116 / JCM 14847 / LMG 12228 / 1C / PRS 101 / PAO1).